The primary structure comprises 297 residues: 4-hydroxy-tetrahydrodipicolinate synthase (297 aa).

A pyruvate-binding site is contributed by T50. The active-site Proton donor/acceptor is Y139. K167 acts as the Schiff-base intermediate with substrate in catalysis. Pyruvate is bound at residue V209.

It belongs to the DapA family. As to quaternary structure, homotetramer; dimer of dimers.

The protein localises to the cytoplasm. It catalyses the reaction L-aspartate 4-semialdehyde + pyruvate = (2S,4S)-4-hydroxy-2,3,4,5-tetrahydrodipicolinate + H2O + H(+). Its pathway is amino-acid biosynthesis; L-lysine biosynthesis via DAP pathway; (S)-tetrahydrodipicolinate from L-aspartate: step 3/4. Catalyzes the condensation of (S)-aspartate-beta-semialdehyde [(S)-ASA] and pyruvate to 4-hydroxy-tetrahydrodipicolinate (HTPA). The protein is 4-hydroxy-tetrahydrodipicolinate synthase of Microcystis aeruginosa (strain NIES-843 / IAM M-2473).